The chain runs to 452 residues: Trigger factor (452 aa).

Residues 169 to 254 (GDQLLIDFVG…VQEVRAPVDG (86 aa)) form the PPIase FKBP-type domain.

The protein belongs to the FKBP-type PPIase family. Tig subfamily.

The protein localises to the cytoplasm. The catalysed reaction is [protein]-peptidylproline (omega=180) = [protein]-peptidylproline (omega=0). Its function is as follows. Involved in protein export. Acts as a chaperone by maintaining the newly synthesized protein in an open conformation. Functions as a peptidyl-prolyl cis-trans isomerase. The sequence is that of Trigger factor (tig) from Caulobacter vibrioides (strain ATCC 19089 / CIP 103742 / CB 15) (Caulobacter crescentus).